We begin with the raw amino-acid sequence, 215 residues long: E3 ubiquitin-protein ligase znrf1 (215 aa).

2 disordered regions span residues 1–39 (MGGK…PGGT) and 66–96 (YTPR…ETGG). The N-myristoyl glycine moiety is linked to residue G2. An RING-type; atypical zinc finger spans residues 172-213 (CVICLEELQQGDTIARLPCLCIYHKSCIDSWFEINRSCPEHP).

Its subcellular location is the endosome. The protein resides in the lysosome. The protein localises to the membrane. It catalyses the reaction S-ubiquitinyl-[E2 ubiquitin-conjugating enzyme]-L-cysteine + [acceptor protein]-L-lysine = [E2 ubiquitin-conjugating enzyme]-L-cysteine + N(6)-ubiquitinyl-[acceptor protein]-L-lysine.. Its pathway is protein modification; protein ubiquitination. E3 ubiquitin-protein ligase that plays a role in neuron cells differentiation. Plays a role in the establishment and maintenance of neuronal transmission and plasticity. This Danio rerio (Zebrafish) protein is E3 ubiquitin-protein ligase znrf1 (znrf1).